Reading from the N-terminus, the 190-residue chain is Selenoprotein S (190 aa).

A helical transmembrane segment spans residues 28–48; sequence SLLATYGWYIVFCCILLYVVF. A VCP/p97-interacting motif (VIM) region spans residues 78 to 90; it reads RQEALAAARLKMQ. The span at 115 to 138 shows a compositional bias: basic and acidic residues; that stretch reads KIERWDSVQEGRSYRGDARKRQEE. The interval 115–190 is disordered; that stretch reads KIERWDSVQE…RRGPSSGGUG (76 aa). Ser140 carries the phosphoserine modification. The span at 160–174 shows a compositional bias: gly residues; that stretch reads RGGGYNPLSGEGGGA. A non-standard amino acid (selenocysteine) is located at residue Sec189.

This sequence belongs to the selenoprotein S family. In terms of assembly, interacts with DERL1 and (via VIM motif) with VCP, suggesting that it forms a membrane complex with DERL1 that serves as a receptor for VCP. Also interacts with DERL2, DERL3 and SELENOK. The SELENOK-SELENOS complex interacts with VCP. In terms of processing, truncated SELENOS proteins produced by failed UGA/Sec decoding are ubiquitinated by the CRL2(KLHDC2) and CRL2(KLHDC3) complexes, which recognizes the glycine (Gly) at the C-terminus of truncated SELENOS proteins. Truncated SELENOS proteins produced by failed UGA/Sec decoding are also ubiquitinated by the CRL5(KLHDC1) complex. In terms of tissue distribution, ubiquitously expressed. Highest expression in liver and lung, with lower levels detected in spleen, kidney, brain, lymph nodes, small intestine, stomach and heart. Very low expression detected in longissimus dorsi.

The protein resides in the cytoplasm. The protein localises to the endoplasmic reticulum membrane. Its function is as follows. Involved in the degradation process of misfolded endoplasmic reticulum (ER) luminal proteins. Participates in the transfer of misfolded proteins from the ER to the cytosol, where they are destroyed by the proteasome in a ubiquitin-dependent manner. Probably acts by serving as a linker between DERL1, which mediates the retrotranslocation of misfolded proteins into the cytosol, and the ATPase complex VCP, which mediates the translocation and ubiquitination. The sequence is that of Selenoprotein S from Sus scrofa (Pig).